Consider the following 423-residue polypeptide: Gamma-glutamyl phosphate reductase (423 aa).

It belongs to the gamma-glutamyl phosphate reductase family.

Its subcellular location is the cytoplasm. The catalysed reaction is L-glutamate 5-semialdehyde + phosphate + NADP(+) = L-glutamyl 5-phosphate + NADPH + H(+). The protein operates within amino-acid biosynthesis; L-proline biosynthesis; L-glutamate 5-semialdehyde from L-glutamate: step 2/2. Catalyzes the NADPH-dependent reduction of L-glutamate 5-phosphate into L-glutamate 5-semialdehyde and phosphate. The product spontaneously undergoes cyclization to form 1-pyrroline-5-carboxylate. The protein is Gamma-glutamyl phosphate reductase of Burkholderia vietnamiensis (strain G4 / LMG 22486) (Burkholderia cepacia (strain R1808)).